A 946-amino-acid polypeptide reads, in one-letter code: C-1-tetrahydrofolate synthase, cytoplasmic (946 aa).

The methylenetetrahydrofolate dehydrogenase and cyclohydrolase stretch occupies residues 2–319 (AGQVLDGKAC…PPLPLKLLTP (318 aa)). Substrate contacts are provided by residues 51–55 (YVRMK) and 98–100 (VQL). An NADP(+)-binding site is contributed by 169–171 (GRS). Serine 176 is modified (phosphoserine). Serine 194 serves as a coordination point for NADP(+). 277–281 (PGGVG) is a binding site for substrate. Residue threonine 318 is modified to Phosphothreonine. Residues 320–946 (VPSDIDISRA…DDDGEIDGLF (627 aa)) are formyltetrahydrofolate synthetase. Residue serine 322 is modified to Phosphoserine. Position 384 to 391 (384 to 391 (TPLGEGKS)) interacts with ATP.

It in the N-terminal section; belongs to the tetrahydrofolate dehydrogenase/cyclohydrolase family. In the C-terminal section; belongs to the formate--tetrahydrofolate ligase family. As to quaternary structure, homodimer.

It is found in the cytoplasm. It localises to the nucleus. It catalyses the reaction (6R)-5,10-methylene-5,6,7,8-tetrahydrofolate + NADP(+) = (6R)-5,10-methenyltetrahydrofolate + NADPH. It carries out the reaction (6R)-5,10-methenyltetrahydrofolate + H2O = (6R)-10-formyltetrahydrofolate + H(+). The catalysed reaction is (6S)-5,6,7,8-tetrahydrofolate + formate + ATP = (6R)-10-formyltetrahydrofolate + ADP + phosphate. It functions in the pathway one-carbon metabolism; tetrahydrofolate interconversion. In terms of biological role, cytoplasmic isozyme of C-1-tetrahydrofolate synthase. The trifunctional enzyme catalyzes the interconversion of the one-carbon derivatives of tetrahydrofolate (THF) between different oxidation states by the enzymatic activities 10-formyltetrahydrofolate synthetase, 5,lO-methenyltetrahydrofolate cyclohydrolase, and 5,lO-methylenetetrahydrofolate dehydrogenase. Involved in the generation of one-carbon intermediates in the biosynthesis of the purine bases. The protein is C-1-tetrahydrofolate synthase, cytoplasmic (ADE3) of Saccharomyces cerevisiae (strain ATCC 204508 / S288c) (Baker's yeast).